Consider the following 717-residue polypeptide: Fatty acid oxidation complex subunit alpha (717 aa).

The tract at residues 1–189 is enoyl-CoA hydratase/isomerase; it reads MIYQSPTIEV…KVGAIDAVVA (189 aa). Aspartate 296 lines the substrate pocket. Positions 311–717 are 3-hydroxyacyl-CoA dehydrogenase; the sequence is KKVNSAAVLG…ANNGSYYQQA (407 aa). NAD(+) is bound by residues methionine 324, aspartate 343, 400–402, lysine 407, and serine 429; that span reads VVE. The active-site For 3-hydroxyacyl-CoA dehydrogenase activity is histidine 450. Residue asparagine 453 coordinates NAD(+). The substrate site is built by asparagine 500 and tyrosine 660.

This sequence in the N-terminal section; belongs to the enoyl-CoA hydratase/isomerase family. In the C-terminal section; belongs to the 3-hydroxyacyl-CoA dehydrogenase family. As to quaternary structure, heterotetramer of two alpha chains (FadB) and two beta chains (FadA).

It catalyses the reaction a (3S)-3-hydroxyacyl-CoA + NAD(+) = a 3-oxoacyl-CoA + NADH + H(+). The enzyme catalyses a (3S)-3-hydroxyacyl-CoA = a (2E)-enoyl-CoA + H2O. The catalysed reaction is a 4-saturated-(3S)-3-hydroxyacyl-CoA = a (3E)-enoyl-CoA + H2O. It carries out the reaction (3S)-3-hydroxybutanoyl-CoA = (3R)-3-hydroxybutanoyl-CoA. It catalyses the reaction a (3Z)-enoyl-CoA = a 4-saturated (2E)-enoyl-CoA. The enzyme catalyses a (3E)-enoyl-CoA = a 4-saturated (2E)-enoyl-CoA. The protein operates within lipid metabolism; fatty acid beta-oxidation. Involved in the aerobic and anaerobic degradation of long-chain fatty acids via beta-oxidation cycle. Catalyzes the formation of 3-oxoacyl-CoA from enoyl-CoA via L-3-hydroxyacyl-CoA. It can also use D-3-hydroxyacyl-CoA and cis-3-enoyl-CoA as substrate. The protein is Fatty acid oxidation complex subunit alpha of Shewanella pealeana (strain ATCC 700345 / ANG-SQ1).